A 386-amino-acid chain; its full sequence is Prostatic acid phosphatase (386 aa).

An N-terminal signal peptide occupies residues 1 to 32 (MRAAPLLLARAASLSLGFLFLLFFWLDRSVLA). Substrate is bound at residue Arg-43. His-44 serves as the catalytic Nucleophile. Residue Arg-47 coordinates substrate. An N-linked (GlcNAc...) asparagine glycan is attached at Asn-94. Arg-111 is a substrate binding site. 3 disulfide bridges follow: Cys-161-Cys-372, Cys-215-Cys-313, and Cys-347-Cys-351. Asn-220 carries N-linked (GlcNAc...) asparagine glycosylation. Residue His-289 coordinates substrate. Asp-290 serves as the catalytic Proton donor. Asn-333 is a glycosylation site (N-linked (GlcNAc...) asparagine).

It belongs to the histidine acid phosphatase family. As to quaternary structure, homodimer; dimer formation is required for phosphatase activity. In terms of processing, N-glycosylated. High mannose content, partially sialylated and fucosylated biantennary complex. Also fucosylated with partially sialylated triantennary complex oligosaccharides. Proteolytically cleaved in seminal fluid to produce several peptides. Peptide PAPf39, the most prominent, forms amyloid beta-sheet fibrils, SEVI (semen-derived enhancer of viral infection). In terms of tissue distribution, highly expressed in the prostate, restricted to glandular and ductal epithelial cells. Also expressed in bladder, kidney, pancreas, lung, cervix, testis and ovary. Weak expression in a subset of pancreatic islet cells, squamous epithelia, the pilosebaceous unit, colonic neuroendocrine cells and skin adnexal structures. Low expression in prostate carcinoma cells and tissues. Widely expressed. Expressed in the sarcolemma of skeletal muscle.

The protein resides in the secreted. It is found in the cell membrane. Its subcellular location is the lysosome membrane. The protein localises to the nucleus. It localises to the cytoplasm. The protein resides in the cytosol. It carries out the reaction a phosphate monoester + H2O = an alcohol + phosphate. The catalysed reaction is 1-(9Z-octadecenoyl)-sn-glycero-3-phosphate + H2O = 1-(9Z-octadecenoyl)-sn-glycerol + phosphate. The enzyme catalyses a ribonucleoside 5'-phosphate + H2O = a ribonucleoside + phosphate. It catalyses the reaction O-phospho-L-tyrosyl-[protein] + H2O = L-tyrosyl-[protein] + phosphate. Phosphatase activity inhibited by L(+)-tartrate, and by its derivative, alpha-benzylaminobenzylphosphonic acid. In terms of biological role, a non-specific tyrosine phosphatase that dephosphorylates a diverse number of substrates under acidic conditions (pH 4-6) including alkyl, aryl, and acyl orthophosphate monoesters and phosphorylated proteins. Has lipid phosphatase activity and inactivates lysophosphatidic acid in seminal plasma. Tyrosine phosphatase that acts as a tumor suppressor of prostate cancer through dephosphorylation of ERBB2 and deactivation of MAPK-mediated signaling. In addition to its tyrosine phosphatase activity has ecto-5'-nucleotidase activity in dorsal root ganglion (DRG) neurons. Generates adenosine from AMP which acts as a pain suppressor. Its function is as follows. (Microbial infection) Forms amyloid beta-sheet fibrils in semen. These fibrils, termed SEVI (semen-derived enhancer of viral infection) capture HIV virions, attach them to target cells and enhance infection. SEVI amyloid fibrils are degraded by polyphenol epigallocatechin-3-gallate (EGCG), a constituent of green tea. Target cell attachment and enhancement of HIV infection is inhibited by surfen. Also similarly boosts XMRV (xenotropic murine leukemia virus-related virus) infection. This is Prostatic acid phosphatase from Homo sapiens (Human).